A 268-amino-acid chain; its full sequence is MLTSNKNTLFNSIFAFKPKKRKNVFIFLHGFGSEYASFSRIFSLFKKKKWPFFTFNFPGHGDNESTDTDQLKLNHFVDLVCDFIVQKKLNNVILIGHSMGGAVAVLVNKVIPLKIKALILVAPMNQTSFSVNKKRILDTFFKRNNSNHKDFVEHEEKRKSLLKIAINAFKKRTTFKTLYSDMVQNAKYGNDSLERAYEMIGNKPTLVILGANDIVTPTKASVDYLANKSDKIIFKVIDGVGHSPHDSAPKLFFDYVLEFLDNLKKQRY.

Histidine 29 is an active-site residue. Serine 98 functions as the Charge relay system in the catalytic mechanism.

Belongs to the lipase/esterase LIP3/BchO family.

The chain is Putative esterase/lipase 2 from Mycoplasma genitalium (strain ATCC 33530 / DSM 19775 / NCTC 10195 / G37) (Mycoplasmoides genitalium).